We begin with the raw amino-acid sequence, 492 residues long: MDAMKYHDLRDFLTLLEQQGELKRITLPVDPHLEITEIADRTLRAGGPALLFESPKGYAMPVLCNLFGTPKRVAMGMGQDDVSALREVGKLLAFLKEPEPPKGFRDLFDKLPQFKQVLNMPTKRLRGAPCQQKIASGDDVDLTRLPVMTCWPDDAAPLITWGLTVTRGPHKERQNLGIYRQQLIGKNKLIMRWLSHRGGALDFQEWLAARPGERFPVSVALGADPATILGAVTPVPDTLSEYAFAGLLRGTKTEVVKCLSNDLEVPASAEIILEGYIEPGEMAPEGPYGDHTGYYNEVDNFPVFTVTHITQREDAIYHSTYTGRPPDEPAVLGVALNEVFVPILQKQFPEIVDFYLPPEGCSYRLAVVTMKKQYAGHAKRVMMGVWSFLRQFMYTKFVIVCDDDVNARDWNDVIWAITTRMDPARDTVLVENTPIDYLDFASPVSGLGSKMGLDATNKWPGETQREWGRPIVKDPEVTARIDAIWDELAIFK.

Residue N175 coordinates Mn(2+). Prenylated FMN-binding positions include 178–180, 192–194, and 197–198; these read IYR, RWL, and RG. E241 contributes to the Mn(2+) binding site. The active-site Proton donor is D290.

The protein belongs to the UbiD family. In terms of assembly, homohexamer. It depends on prenylated FMN as a cofactor. Mn(2+) is required as a cofactor.

It is found in the cell membrane. It carries out the reaction a 4-hydroxy-3-(all-trans-polyprenyl)benzoate + H(+) = a 2-(all-trans-polyprenyl)phenol + CO2. Its pathway is cofactor biosynthesis; ubiquinone biosynthesis. Its function is as follows. Catalyzes the decarboxylation of 3-octaprenyl-4-hydroxy benzoate to 2-octaprenylphenol, an intermediate step in ubiquinone biosynthesis. This is 3-octaprenyl-4-hydroxybenzoate carboxy-lyase from Salmonella paratyphi A (strain ATCC 9150 / SARB42).